We begin with the raw amino-acid sequence, 335 residues long: DNA-directed RNA polymerase subunit alpha (335 aa).

An alpha N-terminal domain (alpha-NTD) region spans residues 1 to 231 (MVREKITVST…DLLIPFLHTK (231 aa)). An alpha C-terminal domain (alpha-CTD) region spans residues 263–335 (KKMALKSIFI…FVIDLPKNKF (73 aa)).

It belongs to the RNA polymerase alpha chain family. In terms of assembly, in plastids the minimal PEP RNA polymerase catalytic core is composed of four subunits: alpha, beta, beta', and beta''. When a (nuclear-encoded) sigma factor is associated with the core the holoenzyme is formed, which can initiate transcription.

It localises to the plastid. The protein localises to the chloroplast. It catalyses the reaction RNA(n) + a ribonucleoside 5'-triphosphate = RNA(n+1) + diphosphate. In terms of biological role, DNA-dependent RNA polymerase catalyzes the transcription of DNA into RNA using the four ribonucleoside triphosphates as substrates. The protein is DNA-directed RNA polymerase subunit alpha of Helianthus annuus (Common sunflower).